The primary structure comprises 603 residues: Serine/threonine-protein kinase PLK1 (603 aa).

Lys-19 participates in a covalent cross-link: Glycyl lysine isopeptide (Lys-Gly) (interchain with G-Cter in ubiquitin). In terms of domain architecture, Protein kinase spans Tyr-53–Phe-305. ATP-binding positions include Leu-59 to Cys-67 and Lys-82. Ser-103 carries the post-translational modification Phosphoserine. Glu-131 lines the ATP pocket. A Phosphoserine modification is found at Ser-137. Asp-176 acts as the Proton acceptor in catalysis. Residues Lys-178–Asn-181 and Asp-194 each bind ATP. The activation loop stretch occupies residues Asp-194–Glu-221. Residue Thr-210 is modified to Phosphothreonine; by AURKA. At Thr-214 the chain carries Phosphothreonine. Ser-269 and Ser-335 each carry phosphoserine; by autocatalysis. The D-box that targets the protein for proteasomal degradation in anaphase motif lies at Arg-337–Leu-340. A Glycyl lysine isopeptide (Lys-Gly) (interchain with G-Cter in SUMO2) cross-link involves residue Lys-338. Residues Ser-375 and Ser-450 each carry the phosphoserine modification. Residues Trp-410–Glu-488 enclose the POLO box 1 domain. Lys-492 is covalently cross-linked (Glycyl lysine isopeptide (Lys-Gly) (interchain with G-Cter in ubiquitin)). Positions Ala-493 to Arg-507 are linker. Thr-498 carries the phosphothreonine modification. In terms of domain architecture, POLO box 2 spans Tyr-510–Ser-592. An important for interaction with phosphorylated proteins region spans residues His-538–Lys-540.

Belongs to the protein kinase superfamily. Ser/Thr protein kinase family. CDC5/Polo subfamily. As to quaternary structure, interacts with CEP170 and EVI5. Interacts and phosphorylates ERCC6L. Interacts with FAM29A. Interacts with SLX4/BTBD12 and TTDN1. Interacts with BUB1B. Interacts (via POLO-box domain) with the phosphorylated form of BUB1, CENPU and CDC25C. Interacts with isoform 3 of SGO1. Interacts with BORA, KIF2A and AURKA. Interacts with TOPORS and CYLD. Interacts with ECT2; the interaction is stimulated upon phosphorylation of ECT2 on 'Thr-444'. Interacts with PRC1. Interacts with KIF20A/MKLP2 (when phosphorylated), leading to the recruitment at the central spindle. Interacts (via POLO box domains) with PPP1R12A/MYPT1 (when previously phosphorylated by CDK1). Part of an astrin (SPAG5)-kinastrin (SKAP) complex containing KNSTRN, SPAG5, PLK1, DYNLL1 and SGO2A. Interacts with BIRC6/bruce. Interacts with CDK1-phosphorylated DCTN6 during mitotic prometaphase; the interaction facilitates recruitment to kinetochores. Interacts with CDK1-phosphorylated FRY; this interaction occurs in mitotic cells, but not in interphase cells. FRY interaction facilitates AURKA-mediated PLK1 phosphorylation. Interacts with CEP68; the interaction phosphorylates CEP68. Interacts (via POLO-box domain) with DCTN1. Interacts with CEP20 in later G1, S, G2 and M phases of the cell cycle; this interaction recruits PLK1 to centrosomes, a step required for S phase progression. Interacts with HSF1; this interaction increases upon heat shock but does not modulate neither HSF1 homotrimerization nor DNA-binding activities. Interacts with HNRNPU; this interaction induces phosphorylation of HNRNPU in mitosis. Interacts (via its N-terminus) with RIOK2. Interacts with KLHL22. Interacts (via POLO box domains) with NEDD9/HEF1 (via C-terminus). Interacts (via RVxF motif) with FIRRM; regulates PLK1 kinase activity. Interacts with SKA3; the interaction promotes the stability of PLK1. Interacts with the MTMR3:MTMR4 heterooligomer; brings CEP55 and PLK1 together during early mitosis, regulating the phosphorylation of CEP55 by PLK1 and its recruitment to the midbody where it can mediate cell abscission. Catalytic activity is enhanced by phosphorylation of Thr-210. Phosphorylation at Thr-210 is first detected on centrosomes in the G2 phase of the cell cycle, peaks in prometaphase and gradually disappears from centrosomes during anaphase. Dephosphorylation at Thr-210 at centrosomes is probably mediated by protein phosphatase 1C (PP1C), via interaction with PPP1R12A/MYPT1. Autophosphorylation and phosphorylation of Ser-137 may not be significant for the activation of PLK1 during mitosis, but may enhance catalytic activity during recovery after DNA damage checkpoint. Phosphorylated in vitro by STK10. In terms of processing, ubiquitinated by the anaphase promoting complex/cyclosome (APC/C) in anaphase and following DNA damage, leading to its degradation by the proteasome. Ubiquitination is mediated via its interaction with FZR1/CDH1. Ubiquitination and subsequent degradation prevents entry into mitosis and is essential to maintain an efficient G2 DNA damage checkpoint. Monoubiquitination at Lys-492 by the BCR(KLHL22) ubiquitin ligase complex does not lead to degradation: it promotes PLK1 dissociation from phosphoreceptor proteins and subsequent removal from kinetochores, allowing silencing of the spindle assembly checkpoint (SAC) and chromosome segregation. Newborn and adult spleen, fetal and newborn kidney, liver, brain, thymus and adult bone marrow, thymus, ovary and testes.

It is found in the nucleus. The protein resides in the chromosome. It localises to the centromere. The protein localises to the kinetochore. Its subcellular location is the cytoplasm. It is found in the cytoskeleton. The protein resides in the microtubule organizing center. It localises to the centrosome. The protein localises to the spindle. Its subcellular location is the midbody. The catalysed reaction is L-seryl-[protein] + ATP = O-phospho-L-seryl-[protein] + ADP + H(+). It catalyses the reaction L-threonyl-[protein] + ATP = O-phospho-L-threonyl-[protein] + ADP + H(+). With respect to regulation, activated by phosphorylation of Thr-210 by AURKA; phosphorylation by AURKA is enhanced by BORA. Once activated, activity is stimulated by binding target proteins. Binding of target proteins has no effect on the non-activated kinase. Several inhibitors targeting PLKs are currently in development and are under investigation in a growing number of clinical trials, such as BI 2536, an ATP-competitive PLK1 inhibitor or BI 6727, a dihydropteridinone that specifically inhibits the catalytic activity of PLK1. Serine/threonine-protein kinase that performs several important functions throughout M phase of the cell cycle, including the regulation of centrosome maturation and spindle assembly, the removal of cohesins from chromosome arms, the inactivation of anaphase-promoting complex/cyclosome (APC/C) inhibitors, and the regulation of mitotic exit and cytokinesis. Polo-like kinase proteins act by binding and phosphorylating proteins that are already phosphorylated on a specific motif recognized by the POLO box domains. Phosphorylates BORA, BUB1B/BUBR1, CCNB1, CDC25C, CEP55, ECT2, ERCC6L, FBXO5/EMI1, FOXM1, KIF20A/MKLP2, CENPU, NEDD1, NINL, NPM1, NUDC, PKMYT1/MYT1, KIZ, MRE11, PPP1R12A/MYPT1, POLQ, PRC1, RACGAP1/CYK4, RAD51, RHNO1, SGO1, STAG2/SA2, TEX14, TOPORS, p73/TP73, TPT1, WEE1 and HNRNPU. Plays a key role in centrosome functions and the assembly of bipolar spindles by phosphorylating KIZ, NEDD1 and NINL. NEDD1 phosphorylation promotes subsequent targeting of the gamma-tubulin ring complex (gTuRC) to the centrosome, an important step for spindle formation. Phosphorylation of NINL component of the centrosome leads to NINL dissociation from other centrosomal proteins. Involved in mitosis exit and cytokinesis by phosphorylating CEP55, ECT2, KIF20A/MKLP2, CENPU, PRC1 and RACGAP1. Recruited at the central spindle by phosphorylating and docking PRC1 and KIF20A/MKLP2; creates its own docking sites on PRC1 and KIF20A/MKLP2 by mediating phosphorylation of sites subsequently recognized by the POLO box domains. Phosphorylates RACGAP1, thereby creating a docking site for the Rho GTP exchange factor ECT2 that is essential for the cleavage furrow formation. Promotes the central spindle recruitment of ECT2. Plays a central role in G2/M transition of mitotic cell cycle by phosphorylating CCNB1, CDC25C, FOXM1, CENPU, PKMYT1/MYT1, PPP1R12A/MYPT1 and WEE1. Part of a regulatory circuit that promotes the activation of CDK1 by phosphorylating the positive regulator CDC25C and inhibiting the negative regulators WEE1 and PKMYT1/MYT1. Also acts by mediating phosphorylation of cyclin-B1 (CCNB1) on centrosomes in prophase. Phosphorylates FOXM1, a key mitotic transcription regulator, leading to enhance FOXM1 transcriptional activity. Involved in kinetochore functions and sister chromatid cohesion by phosphorylating BUB1B/BUBR1, FBXO5/EMI1 and STAG2/SA2. PLK1 is high on non-attached kinetochores suggesting a role of PLK1 in kinetochore attachment or in spindle assembly checkpoint (SAC) regulation. Required for kinetochore localization of BUB1B. Regulates the dissociation of cohesin from chromosomes by phosphorylating cohesin subunits such as STAG2/SA2. Phosphorylates SGO1: required for spindle pole localization of isoform 3 of SGO1 and plays a role in regulating its centriole cohesion function. Mediates phosphorylation of FBXO5/EMI1, a negative regulator of the APC/C complex during prophase, leading to FBXO5/EMI1 ubiquitination and degradation by the proteasome. Acts as a negative regulator of p53 family members: phosphorylates TOPORS, leading to inhibit the sumoylation of p53/TP53 and simultaneously enhance the ubiquitination and subsequent degradation of p53/TP53. Phosphorylates the transactivation domain of the transcription factor p73/TP73, leading to inhibit p73/TP73-mediated transcriptional activation and pro-apoptotic functions. Phosphorylates BORA, and thereby promotes the degradation of BORA. Contributes to the regulation of AURKA function. Also required for recovery after DNA damage checkpoint and entry into mitosis. Phosphorylates MISP, leading to stabilization of cortical and astral microtubule attachments required for proper spindle positioning. Together with MEIKIN, acts as a regulator of kinetochore function during meiosis I: required both for mono-orientation of kinetochores on sister chromosomes and protection of centromeric cohesin from separase-mediated cleavage. Phosphorylates CEP68 and is required for its degradation. Regulates nuclear envelope breakdown during prophase by phosphorylating DCTN1 resulting in its localization in the nuclear envelope. Phosphorylates the heat shock transcription factor HSF1, promoting HSF1 nuclear translocation upon heat shock. Phosphorylates HSF1 also in the early mitotic period; this phosphorylation regulates HSF1 localization to the spindle pole, the recruitment of the SCF(BTRC) ubiquitin ligase complex induicing HSF1 degradation, and hence mitotic progression. Regulates mitotic progression by phosphorylating RIOK2. Through the phosphorylation of DZIP1 regulates the localization during mitosis of the BBSome, a ciliary protein complex involved in cilium biogenesis. Regulates DNA repair during mitosis by mediating phosphorylation of POLQ and RHNO1, thereby promoting POLQ recruitment to DNA damage sites. Phosphorylates ATXN10 which may play a role in the regulation of cytokinesis and may stimulate the proteasome-mediated degradation of ATXN10. In Mus musculus (Mouse), this protein is Serine/threonine-protein kinase PLK1 (Plk1).